A 750-amino-acid polypeptide reads, in one-letter code: Photosystem I P700 chlorophyll a apoprotein A1 (750 aa).

The next 8 helical transmembrane spans lie at 72–95 (VFSA…FHGA), 158–181 (LYTT…FHYH), 197–221 (MNHH…HVSL), 293–311 (TVHH…GHMY), 348–371 (WHAQ…HHMY), 387–413 (LSLF…IFMV), 435–457 (AIIS…LYIH), and 532–550 (FLVH…LILL). 2 residues coordinate [4Fe-4S] cluster: Cys574 and Cys583. 2 consecutive transmembrane segments (helical) span residues 590–611 (HVFL…HFSW) and 664–686 (LSAY…MFLF). A chlorophyll a'-binding site is contributed by His675. Residues Met683 and Tyr691 each coordinate chlorophyll a. Trp692 contacts phylloquinone. The chain crosses the membrane as a helical span at residues 724–744 (AVGVAHYLLGGIATTWAFFLA).

The protein belongs to the PsaA/PsaB family. The PsaA/B heterodimer binds the P700 chlorophyll special pair and subsequent electron acceptors. PSI consists of a core antenna complex that captures photons, and an electron transfer chain that converts photonic excitation into a charge separation. The eukaryotic PSI reaction center is composed of at least 11 subunits. P700 is a chlorophyll a/chlorophyll a' dimer, A0 is one or more chlorophyll a, A1 is one or both phylloquinones and FX is a shared 4Fe-4S iron-sulfur center. serves as cofactor.

It localises to the plastid. The protein resides in the chloroplast thylakoid membrane. It catalyses the reaction reduced [plastocyanin] + hnu + oxidized [2Fe-2S]-[ferredoxin] = oxidized [plastocyanin] + reduced [2Fe-2S]-[ferredoxin]. PsaA and PsaB bind P700, the primary electron donor of photosystem I (PSI), as well as the electron acceptors A0, A1 and FX. PSI is a plastocyanin-ferredoxin oxidoreductase, converting photonic excitation into a charge separation, which transfers an electron from the donor P700 chlorophyll pair to the spectroscopically characterized acceptors A0, A1, FX, FA and FB in turn. Oxidized P700 is reduced on the lumenal side of the thylakoid membrane by plastocyanin. The sequence is that of Photosystem I P700 chlorophyll a apoprotein A1 from Mesostigma viride (Green alga).